We begin with the raw amino-acid sequence, 433 residues long: MTTTIRQFTSSSSIKGSSGLGGGSSRTSCRLSGSLGAGSCRLGSASGLGSALGSNSYSSCYSFGTGSGYGGNFGGVDGLLAGGEKATMQNLNDRLASYLDKVRALEEANTELEVKIRDWYQKQAPGPARDYSAYYHTIEDLKNKILVATVDNASILLQIDNARLAADDFRTKFETEQALRMSVEADINGLRRVLDELTLARADLEMQIENLKEELAYLKKNHEEEMNALRGQVGGEINVEMDAAPGVDLSRILSEMRDQYEKMAEKNRKDAEDWFFSKTEELNREVATNSELVQSGKSEISELRRTMQALEIELQSQLSMKASLEGSLAETENRYCVQLSQIQGLIGSVEEQLAQLRCEMEQQNQEYKILLDVKTRLEQEIATYRRLLEGEDAHLTQYKPKEPVTTRQVRTIVEEVQDGKVISSREQVHQTTR.

Residues 1 to 24 (MTTTIRQFTSSSSIKGSSGLGGGS) are disordered. Positions 1 to 83 (MTTTIRQFTS…GGVDGLLAGG (83 aa)) are head. 2 positions are modified to phosphoserine: Ser-12 and Ser-13. Lys-15 participates in a covalent cross-link: Glycyl lysine isopeptide (Lys-Gly) (interchain with G-Cter in SUMO1); alternate. Lys-15 participates in a covalent cross-link: Glycyl lysine isopeptide (Lys-Gly) (interchain with G-Cter in SUMO2); alternate. A phosphoserine mark is found at Ser-25, Ser-32, Ser-34, and Ser-39. Position 44 is a phosphoserine; by RPS6KA1 (Ser-44). Positions 84-120 (EKATMQNLNDRLASYLDKVRALEEANTELEVKIRDWY) are coil 1A. In terms of domain architecture, IF rod spans 84 to 395 (EKATMQNLND…RLLEGEDAHL (312 aa)). Thr-110 carries the post-translational modification Phosphothreonine. A linker 1 region spans residues 121–138 (QKQAPGPARDYSAYYHTI). The coil 1B stretch occupies residues 139 to 230 (EDLKNKILVA…NHEEEMNALR (92 aa)). The interval 231 to 250 (GQVGGEINVEMDAAPGVDLS) is linker 12. The segment at 251-392 (RILSEMRDQY…TYRRLLEGED (142 aa)) is coil 2. A Glycyl lysine isopeptide (Lys-Gly) (interchain with G-Cter in SUMO2) cross-link involves residue Lys-278. Position 279 is a phosphothreonine (Thr-279). Position 323 is a phosphoserine (Ser-323). The segment at 393–433 (AHLTQYKPKEPVTTRQVRTIVEEVQDGKVISSREQVHQTTR) is tail. Residues Lys-399, Lys-401, and Lys-420 each participate in a glycyl lysine isopeptide (Lys-Gly) (interchain with G-Cter in SUMO1); alternate cross-link. Glycyl lysine isopeptide (Lys-Gly) (interchain with G-Cter in SUMO2); alternate cross-links involve residues Lys-399, Lys-401, and Lys-420.

Belongs to the intermediate filament family. As to quaternary structure, heterodimer of a type I and a type II keratin. KRT17 associates with KRT6 isomers (KRT6A or KRT6B). Interacts with TRADD and SFN. Post-translationally, phosphorylation at Ser-44 occurs in a growth- and stress-dependent fashion in skin keratinocytes, it has no effect on filament organization. In terms of tissue distribution, expressed strongly in outer root sheath and medulla region of hair follicle and in the early differentiating epithelial cells (trichocytes) within the hair bulb region. Weak expression in the matrix cells of hair bulb. Also present in the sweat gland within the skin, vibrissae follicle, salivary gland, tooth and thymus.

The protein resides in the cytoplasm. Type I keratin involved in the formation and maintenance of various skin appendages, specifically in determining shape and orientation of hair. Required for the correct growth of hair follicles, in particular for the persistence of the anagen (growth) state. Modulates the function of TNF-alpha in the specific context of hair cycling. Regulates protein synthesis and epithelial cell growth through binding to the adapter protein SFN and by stimulating Akt/mTOR pathway. Involved in tissue repair. May be a marker of basal cell differentiation in complex epithelia and therefore indicative of a certain type of epithelial 'stem cells'. Acts as a promoter of epithelial proliferation by acting a regulator of immune response in skin: promotes Th1/Th17-dominated immune environment contributing to the development of basaloid skin tumors. May act as an autoantigen in the immunopathogenesis of psoriasis, with certain peptide regions being a major target for autoreactive T-cells and hence causing their proliferation. The sequence is that of Keratin, type I cytoskeletal 17 (Krt17) from Mus musculus (Mouse).